A 512-amino-acid chain; its full sequence is MTDAHTAGPFIAAIDQGTTSSRCIVFDRDGRIVSVDQKEHEQIFPKPGWVEHNAAEIWTNVQEVVAGAVEKAGITRDDIKAIGITNQRETTLLWDKNTGEPVHNALVWQDTRTDALCKELGRNVGQDRFRRETGLPLASYFAGPKARWLLDNVEGLRERAEAGDILFGTMDTWVIWNLTGGVNGGKHVTDVTNASRTMLMNLHTMQWDDKIAESIGVPLAMLPEIRSSAEVYGEITGGKLGDLLGGIPVASALGDQQAALFGQTCFSEGEAKSTYGTGTFMLMNTGDKIINSYSGLLTTVGYQIGDQKPVYALEGSIAVTGSLVQWMRDQMGLIKSAAEIETLASSVEDNGGAYFVPAFSGLFAPYWRSDARGVIAGLTRYVTKAHIARAVLEATAWQTREITDAMTKDSGVELAALKVDGGMTSNNLLMQTLSDFLDAPVVRPMVAETTCLGAAYAAGLAVGFWTNTEDLRANWRRAAEWTPNMAAETRDREYKSWLKAVERTMGWIEDEE.

Threonine 18 is a binding site for ADP. Residues threonine 18, threonine 19, and serine 20 each coordinate ATP. Threonine 18 contacts sn-glycerol 3-phosphate. Arginine 22 is a binding site for ADP. Sn-glycerol 3-phosphate is bound by residues arginine 88, glutamate 89, tyrosine 140, and aspartate 255. Glycerol is bound by residues arginine 88, glutamate 89, tyrosine 140, aspartate 255, and glutamine 256. 2 residues coordinate ADP: threonine 277 and glycine 321. Residues threonine 277, glycine 321, glutamine 325, and glycine 422 each coordinate ATP. ADP is bound by residues glycine 422 and asparagine 426.

It belongs to the FGGY kinase family.

The enzyme catalyses glycerol + ATP = sn-glycerol 3-phosphate + ADP + H(+). It participates in polyol metabolism; glycerol degradation via glycerol kinase pathway; sn-glycerol 3-phosphate from glycerol: step 1/1. With respect to regulation, inhibited by fructose 1,6-bisphosphate (FBP). Its function is as follows. Key enzyme in the regulation of glycerol uptake and metabolism. Catalyzes the phosphorylation of glycerol to yield sn-glycerol 3-phosphate. This is Glycerol kinase 1 from Streptomyces avermitilis (strain ATCC 31267 / DSM 46492 / JCM 5070 / NBRC 14893 / NCIMB 12804 / NRRL 8165 / MA-4680).